The sequence spans 117 residues: Immunoglobulin heavy variable 3-5 (117 aa).

The signal sequence occupies residues 1–18; that stretch reads MKMFTLLYLLTVVPGILS. Residues 19–117 enclose the Ig-like domain; that stretch reads DVQLQESGPG…EDTATYYCAR (99 aa). A disulfide bridge links cysteine 40 with cysteine 115.

This Mus musculus (Mouse) protein is Immunoglobulin heavy variable 3-5.